The chain runs to 306 residues: Ribonuclease Z (306 aa).

Positions 63, 65, 67, 68, 140, 211, and 269 each coordinate Zn(2+). D67 serves as the catalytic Proton acceptor.

It belongs to the RNase Z family. As to quaternary structure, homodimer. It depends on Zn(2+) as a cofactor.

The catalysed reaction is Endonucleolytic cleavage of RNA, removing extra 3' nucleotides from tRNA precursor, generating 3' termini of tRNAs. A 3'-hydroxy group is left at the tRNA terminus and a 5'-phosphoryl group is left at the trailer molecule.. In terms of biological role, zinc phosphodiesterase, which displays some tRNA 3'-processing endonuclease activity. Probably involved in tRNA maturation, by removing a 3'-trailer from precursor tRNA. The chain is Ribonuclease Z from Listeria monocytogenes serotype 4a (strain HCC23).